The sequence spans 625 residues: MPSDLAKKKAAKKKEAAKARQRPRKGHEENGDAITEPQVAEERNEEANGRETTEVDLLTKELEDFEMKKAAARAVTGVLASHPNSTDAHIINLSLTFHGQELLSDTKLELNSGRRYGLIGLNGIGKSMLLSAIGKREVPIPEHIDIYHLTREMPPSDKTPLQCVMEVDTERAMLEREAERLAHEDAECEKLLELYERLEELDADKAEMRASRILHGLGFTPAMQRKKLKDFSGGWRMRVALARALFIRPFMLLLDEPTNHLDLDACVWLEEELKTFKRILVLVSHSQDFLNGVCTNIIHMHNKKLKYYTGNYDQYVKTRLELEENQMKRFHWEQDQIAHMKNYIARFGHGSAKLARQAQSKEKTLQKMMASGLTERVVSDKTLSFYFPPCGKIPPPVIMVQNVSFKYTKDGPCIYNNLEFGIDLDTRVALVGPNGAGKSTLLKLLTGELLPTDGMIRKHSHVKIGRYHQHLQEQLDLDLSPLEYMMKCYPEIKEKEEMRKIIGRYGLTGKQQVSPIRNLSDGQKCRVCLAWLAWQNPHMLFLDEPTNHLDIETIDALADAINDFEGGMMLVSHDFRLIQQVAQEIWVCEKQTITKWPGDILAYKEHLKSKLVGEEPQPTRRTHNV.

The segment at 1 to 54 is disordered; it reads MPSDLAKKKAAKKKEAAKARQRPRKGHEENGDAITEPQVAEERNEEANGRETTE. Positions 40–54 are enriched in basic and acidic residues; the sequence is AEERNEEANGRETTE. 2 consecutive ABC transporter domains span residues 88–327 and 398–615; these read AHII…ENQM and IMVQ…VGEE. An ATP-binding site is contributed by 120-127; the sequence is GLNGIGKS. T220 bears the Phosphothreonine mark. K306 carries the post-translational modification N6-acetyllysine. 432-439 serves as a coordination point for ATP; the sequence is GPNGAGKS. The residue at position 514 (S514) is a Phosphoserine.

Belongs to the ABC transporter superfamily. ABCF family. EF3 subfamily.

This chain is ATP-binding cassette sub-family F member 2 (ABCF2), found in Bos taurus (Bovine).